We begin with the raw amino-acid sequence, 332 residues long: Holliday junction branch migration complex subunit RuvB (332 aa).

Positions 1–181 (MARILDNNVM…FGITGHMEYY (181 aa)) are large ATPase domain (RuvB-L). Residues L20, R21, G62, K65, T66, T67, 128-130 (EDF), R171, Y181, and R218 each bind ATP. Residue T66 coordinates Mg(2+). A small ATPAse domain (RuvB-S) region spans residues 182 to 252 (QEKDLTEIVE…ITDRALTMLD (71 aa)). The segment at 255–332 (REGLNYIDQK…RHLGYPYQNT (78 aa)) is head domain (RuvB-H). Residues R291, R310, R312, and R315 each contribute to the DNA site.

This sequence belongs to the RuvB family. As to quaternary structure, homohexamer. Forms an RuvA(8)-RuvB(12)-Holliday junction (HJ) complex. HJ DNA is sandwiched between 2 RuvA tetramers; dsDNA enters through RuvA and exits via RuvB. An RuvB hexamer assembles on each DNA strand where it exits the tetramer. Each RuvB hexamer is contacted by two RuvA subunits (via domain III) on 2 adjacent RuvB subunits; this complex drives branch migration. In the full resolvosome a probable DNA-RuvA(4)-RuvB(12)-RuvC(2) complex forms which resolves the HJ.

Its subcellular location is the cytoplasm. It catalyses the reaction ATP + H2O = ADP + phosphate + H(+). The RuvA-RuvB-RuvC complex processes Holliday junction (HJ) DNA during genetic recombination and DNA repair, while the RuvA-RuvB complex plays an important role in the rescue of blocked DNA replication forks via replication fork reversal (RFR). RuvA specifically binds to HJ cruciform DNA, conferring on it an open structure. The RuvB hexamer acts as an ATP-dependent pump, pulling dsDNA into and through the RuvAB complex. RuvB forms 2 homohexamers on either side of HJ DNA bound by 1 or 2 RuvA tetramers; 4 subunits per hexamer contact DNA at a time. Coordinated motions by a converter formed by DNA-disengaged RuvB subunits stimulates ATP hydrolysis and nucleotide exchange. Immobilization of the converter enables RuvB to convert the ATP-contained energy into a lever motion, pulling 2 nucleotides of DNA out of the RuvA tetramer per ATP hydrolyzed, thus driving DNA branch migration. The RuvB motors rotate together with the DNA substrate, which together with the progressing nucleotide cycle form the mechanistic basis for DNA recombination by continuous HJ branch migration. Branch migration allows RuvC to scan DNA until it finds its consensus sequence, where it cleaves and resolves cruciform DNA. The sequence is that of Holliday junction branch migration complex subunit RuvB from Streptococcus pyogenes serotype M18 (strain MGAS8232).